The chain runs to 152 residues: Transcriptional regulator MraZ (152 aa).

SpoVT-AbrB domains lie at 5-52 (ASAI…PIQE) and 81-124 (AHEC…DEAA).

This sequence belongs to the MraZ family. Forms oligomers.

It localises to the cytoplasm. Its subcellular location is the nucleoid. The protein is Transcriptional regulator MraZ of Shewanella halifaxensis (strain HAW-EB4).